The primary structure comprises 444 residues: Probable galactarate/D-glucarate transporter GarP (444 aa).

At 1–11 (MILDTVDEKKK) the chain is on the cytoplasmic side. The helical transmembrane segment at 12–32 (GVHTRYLILLIIFIVTAVNYA) threads the bilayer. Over 33–56 (DRATLSIAGTEVAKELQLSAVSMG) the chain is Periplasmic. The helical transmembrane segment at 57–77 (YIFSAFGWAYLLMQIPGGWLL) threads the bilayer. Residues 78–89 (DKFGSKKVYTYS) are Cytoplasmic-facing. 2 helical membrane passes run 90 to 110 (LFFW…PLAW) and 111 to 131 (AGIS…PSFP). Residues 132 to 157 (ANARIVAAWFPTKERGTASAIFNSAQ) lie on the Cytoplasmic side of the membrane. The next 2 helical transmembrane spans lie at 158–178 (YFSL…WGWE) and 179–199 (HVFT…IKLI). Residues 200–252 (HNPTDHPRMSAEELKFISENGAVVDMDHKKPGSAAASGPKLHYIKQLLSNRMM) lie on the Cytoplasmic side of the membrane. The chain crosses the membrane as a helical span at residues 253 to 273 (LGVFFGQYFINTITWFFLTWF). The Periplasmic segment spans residues 274–288 (PIYLVQEKGMSILKV). A helical transmembrane segment spans residues 289–309 (GLVASIPALCGFAGGVLGGVF). The Cytoplasmic segment spans residues 310–319 (SDYLIKRGLS). Residues 320 to 340 (LTLARKLPIVLGMLLASTIIL) traverse the membrane as a helical segment. Residues 341 to 350 (CNYTNNTTLV) are Periplasmic-facing. A helical membrane pass occupies residues 351 to 371 (VMLMALAFFGKGFGALGWPVI). At 372–385 (SDTAPKEIVGLCGG) the chain is on the cytoplasmic side. A helical membrane pass occupies residues 386 to 406 (VFNVFGNVASIVTPLVIGYLV). Residues 407-413 (SELHSFN) are Periplasmic-facing. Residues 414–434 (AALVFVGCSALMAMVCYLFVV) traverse the membrane as a helical segment. The Cytoplasmic segment spans residues 435–444 (GDIKRMELQK).

It belongs to the major facilitator superfamily. Phthalate permease family.

The protein localises to the cell inner membrane. It catalyses the reaction galactarate(in) + H(+)(in) = galactarate(out) + H(+)(out). It carries out the reaction D-glucarate(in) + H(+)(in) = D-glucarate(out) + H(+)(out). The catalysed reaction is (R)-glycerate(in) + H(+)(in) = (R)-glycerate(out) + H(+)(out). Functionally, probably involved in the uptake of galactarate and/or D-glucarate. May also transport D-glycerate. In Escherichia coli (strain K12), this protein is Probable galactarate/D-glucarate transporter GarP.